The sequence spans 412 residues: Serine--tRNA ligase (412 aa).

L-serine is bound at residue 228 to 230 (TAE). 259–261 (RKE) contributes to the ATP binding site. Glutamate 282 lines the L-serine pocket. ATP is bound at residue 346 to 349 (EISS). Serine 380 lines the L-serine pocket.

This sequence belongs to the class-II aminoacyl-tRNA synthetase family. Type-1 seryl-tRNA synthetase subfamily. As to quaternary structure, homodimer. The tRNA molecule binds across the dimer.

Its subcellular location is the cytoplasm. It catalyses the reaction tRNA(Ser) + L-serine + ATP = L-seryl-tRNA(Ser) + AMP + diphosphate + H(+). The catalysed reaction is tRNA(Sec) + L-serine + ATP = L-seryl-tRNA(Sec) + AMP + diphosphate + H(+). Its pathway is aminoacyl-tRNA biosynthesis; selenocysteinyl-tRNA(Sec) biosynthesis; L-seryl-tRNA(Sec) from L-serine and tRNA(Sec): step 1/1. Catalyzes the attachment of serine to tRNA(Ser). Is also able to aminoacylate tRNA(Sec) with serine, to form the misacylated tRNA L-seryl-tRNA(Sec), which will be further converted into selenocysteinyl-tRNA(Sec). The polypeptide is Serine--tRNA ligase (Aliarcobacter butzleri (strain RM4018) (Arcobacter butzleri)).